The sequence spans 1556 residues: MPLLHRKPFVRQKPPADLRPDEEVFYCKVTNEIFRHYDDFFERTILCNSLVWSCAVTGRPGLTYQEALESEKKARQNLQSFPEPLIIPVLYLTSLTHRSRLHEICDDIFAYVKDRYFVEETVEVIRNNGARLQCRILEVLPPSHQNGFANGHVNSVDGETIIISDSDDSETQSCSFQNGKKKDAIDPLLFKYKVQPTKKELHESAIVKATQISRRKHLFSRDKLKLFLKQHCEPQDGVIKIKASSLSTYKIAEQDFSYFFPDDPPTFIFSPANRRRGRPPKRIHISQEDNVANKQTLASYRSKATKERDKLLKQEEMKSLAFEKAKLKREKADALEAKKKEKEDKEKKREELKKIVEEERLKKKEEKERLKVEREKEREKLREEKRKYVEYLKQWSKPREDMECDDLKELPEPTPVKTRLPPEIFGDALMVLEFLNAFGELFDLQDEFPDGVTLEVLEEALVGNDSEGPLCELLFFFLTAIFQAIAEEEEEVAKEQLTDADTKDLTEALDEDADPTKSALSAVASLAAAWPQLHQGCSLKSLDLDSCTLSEILRLHILASGADVTSANAKYRYQKRGGFDATDDACMELRLSNPSLVKKLSSTSVYDLTPGEKMKILHALCGKLLTLVSTRDFIEDYVDILRQAKQEFRELKAEQHRKEREEAAARIRKRKEEKLKEQEQKMKEKQEKLKEDEQRNSTADISIGEEEREDFDTSIESKDTEQKELDQDMVTEDEDDPGSHKRGRRGKRGQNGFKEFTRQEQINCVTREPLTADEEEALKQEHQRKEKELLEKIQSAIACTNIFPLGRDRMYRRYWIFPSIPGLFIEEDYSGLTEDMLLPRPSSFQNNVQSQDPQVSTKTGEPLMSESTSNIDQGPRDHSVQLPKPVHKPNRWCFYSSCEQLDQLIEALNSRGHRESALKETLLQEKSRICAQLARFSEEKFHFSDKPQPDSKPTYSRGRSSNAYDPSQMCAEKQLELRLRDFLLDIEDRIYQGTLGAIKVTDRHIWRSALESGRYELLSEENKENGIIKTVNEDVEEMEIDEQTKVIVKDRLLGIKTETPSTVSTNASTPQSVSSVVHYLAMALFQIEQGIERRFLKAPLDASDSGRSYKTVLDRWRESLLSSASLSQVFLHLSTLDRSVIWSKSILNARCKICRKKGDAENMVLCDGCDRGHHTYCVRPKLKTVPEGDWFCPECRPKQRSRRLSSRQRPSLESDEDVEDSMGGEDDEVDGDEEEGQSEEEEYEVEQDEDDSQEEEEVSLPKRGRPQVRLPVKTRGKLSSSFSSRGQQQEPGRYPSRSQQSTPKTTVSSKTGRSLRKINSAPPTETKSLRIASRSTRHSHGPLQADVFVELLSPRRKRRGRKSANNTPENSPNFPNFRVIATKSSEQSRSVNIASKLSLQESESKRRCRKRQSPEPSPVTLGRRSSGRQGGVHELSAFEQLVVELVRHDDSWPFLKLVSKIQVPDYYDIIKKPIALNIIREKVNKCEYKLASEFIDDIELMFSNCFEYNPRNTSEAKAGTRLQAFFHIQAQKLGLHVTPSNVDQVSTPPAAKKSRI.

Positions 1-128 (MPLLHRKPFV…EETVEVIRNN (128 aa)) are required for interaction with the CHRAC1-POLE3 heterodimer. Required for interaction with the CHRAC1-POLE3 heterodimer. The interval 1-133 (MPLLHRKPFV…VIRNNGARLQ (133 aa)) is required for interaction with NCOR1. Positions 22-128 (EEVFYCKVTN…EETVEVIRNN (107 aa)) constitute a WAC domain. Ser270 is modified (phosphoserine). The stretch at 306-397 (KERDKLLKQE…YVEYLKQWSK (92 aa)) forms a coiled coil. The region spanning 422–487 (PEIFGDALMV…LTAIFQAIAE (66 aa)) is the DDT domain. The stretch at 634-709 (IEDYVDILRQ…DISIGEEERE (76 aa)) forms a coiled coil. Residues 662 to 695 (EAAARIRKRKEEKLKEQEQKMKEKQEKLKEDEQR) show a composition bias toward basic and acidic residues. Disordered stretches follow at residues 662–754 (EAAA…NGFK), 841–877 (PSSF…GPRD), and 941–966 (FHFS…AYDP). Residues 667-933 (IRKRKEEKLK…QEKSRICAQL (267 aa)) form a required for interaction with SMARCA5 and formation of the CHRAC ISWI chromatin remodeling complex region. Ser702 is subject to Phosphoserine. Residues 703-713 (IGEEEREDFDT) are compositionally biased toward acidic residues. Over residues 715-726 (IESKDTEQKELD) the composition is skewed to basic and acidic residues. Residues 727–736 (QDMVTEDEDD) show a composition bias toward acidic residues. Thr731 is subject to Phosphothreonine. Polar residues-rich tracts occupy residues 842–872 (SSFQ…SNID) and 951–965 (SKPT…NAYD). Lys952 is covalently cross-linked (Glycyl lysine isopeptide (Lys-Gly) (interchain with G-Cter in SUMO2)). Ser960 and Ser961 each carry phosphoserine. A PHD-type zinc finger spans residues 1148–1198 (NARCKICRKKGDAENMVLCDGCDRGHHTYCVRPKLKTVPEGDWFCPECRPK). Disordered stretches follow at residues 1202-1376 (RRLS…NFPN) and 1399-1431 (LQES…RQGG). A compositionally biased stretch (acidic residues) spans 1213-1258 (ESDEDVEDSMGGEDDEVDGDEEEGQSEEEEYEVEQDEDDSQEEEEV). Over residues 1262–1276 (KRGRPQVRLPVKTRG) the composition is skewed to basic residues. Residues 1277-1312 (KLSSSFSSRGQQQEPGRYPSRSQQSTPKTTVSSKTG) show a composition bias toward polar residues. Phosphoserine occurs at positions 1281, 1320, 1339, 1353, 1363, 1371, 1402, 1413, and 1417. The segment covering 1363–1374 (SANNTPENSPNF) has biased composition (polar residues). The 104-residue stretch at 1430 to 1533 (GGVHELSAFE…AFFHIQAQKL (104 aa)) folds into the Bromo domain. Thr1547 bears the Phosphothreonine mark.

This sequence belongs to the WAL family. As to quaternary structure, component of the ACF-1 ISWI chromatin remodeling complex at least composed of SMARCA1 and BAZ1A, which regulates the spacing of histone octamers on the DNA template to facilitate access to DNA. Within the ACF-1 ISWI chromatin remodeling complex interacts with SMARCA1; the interaction is direct. Component of the ACF-5 ISWI chromatin remodeling complex (also called the ACF complex) at least composed of BAZ1A and SMARCA5/SNF2H, which regulates the spacing of histone octamers on the DNA template to facilitate access to DNA. Within the ACF-5 ISWI chromatin remodeling complex interacts with SMARCA5/SNF2H; the interaction is direct. Component of the CHRAC ISWI chromatin remodeling complex at least composed of SMARCA5/SNF2H, BAZ1A/ACF1, CHRAC1 and POLE3; the complex preferentially binds DNA through the CHRAC1-POLE3 heterodimer and possesses ATP-dependent nucleosome-remodeling activity. Within the complex interacts (via N-terminus) with POLE3-CHRAC1 heterodimer; the interaction is direct and is required for the complex to preferentially bind to DNA. Within the complex interacts with SMARCA5/SNF2H; the interaction is direct and promotes the interaction with the POLE3-CHRAC1 heterodimer. Interacts with NCOR1 (via its RD1 domain); the interaction corepresses a number of NCOR1-regulated genes. In terms of tissue distribution, highly expressed in testis and at low or undetectable levels in other tissues analyzed.

The protein localises to the nucleus. In terms of biological role, regulatory subunit of the ATP-dependent ACF-1 and ACF-5 ISWI chromatin remodeling complexes, which form ordered nucleosome arrays on chromatin and slide edge- and center-positioned histone octamers away from their original location on the DNA template to facilitate access to DNA during DNA-templated processes such as DNA replication, transcription, and repair. Both complexes regulate the spacing of nucleosomes along the chromatin and have the ability to slide mononucleosomes to the center of a DNA template in an ATP-dependent manner. The ACF-1 ISWI chromatin remodeling complex has a lower ATP hydrolysis rate than the ACF-5 ISWI chromatin remodeling complex. Has a role in sensing the length of DNA which flank nucleosomes, which modulates the nucleosome spacing activity of the ACF-5 ISWI chromatin remodeling complex. Involved in DNA replication and together with SMARCA5/SNF2H is required for replication of pericentric heterochromatin in S-phase. May have a role in nuclear receptor-mediated transcription repression. The protein is Bromodomain adjacent to zinc finger domain protein 1A (BAZ1A) of Homo sapiens (Human).